A 220-amino-acid chain; its full sequence is uncharacterized protein (220 aa).

Residues 194-220 (DQSQQQATKSNSKTKKLKGNHGEKTKI) are disordered. The segment covering 195–204 (QSQQQATKSN) has biased composition (polar residues).

This is an uncharacterized protein from Borreliella burgdorferi (strain ATCC 35210 / DSM 4680 / CIP 102532 / B31) (Borrelia burgdorferi).